Consider the following 586-residue polypeptide: A-type ATP synthase subunit A (586 aa).

Position 232-239 (G232–T239) interacts with ATP.

This sequence belongs to the ATPase alpha/beta chains family. Has multiple subunits with at least A(3), B(3), C, D, E, F, H, I and proteolipid K(x).

The protein resides in the cell membrane. It carries out the reaction ATP + H2O + 4 H(+)(in) = ADP + phosphate + 5 H(+)(out). Component of the A-type ATP synthase that produces ATP from ADP in the presence of a proton gradient across the membrane. The A chain is the catalytic subunit. This chain is A-type ATP synthase subunit A, found in Methanococcus maripaludis (strain DSM 14266 / JCM 13030 / NBRC 101832 / S2 / LL).